Reading from the N-terminus, the 133-residue chain is Small ribosomal subunit protein uS8 (133 aa).

The protein belongs to the universal ribosomal protein uS8 family. Part of the 30S ribosomal subunit. Contacts proteins S5 and S12.

Functionally, one of the primary rRNA binding proteins, it binds directly to 16S rRNA central domain where it helps coordinate assembly of the platform of the 30S subunit. The polypeptide is Small ribosomal subunit protein uS8 (Orientia tsutsugamushi (strain Boryong) (Rickettsia tsutsugamushi)).